A 168-amino-acid chain; its full sequence is NADH-quinone oxidoreductase subunit I (168 aa).

2 consecutive 4Fe-4S ferredoxin-type domains span residues 58 to 88 and 99 to 128; these read LRTY…IEAQ and VRYD…EGPN. [4Fe-4S] cluster is bound by residues cysteine 68, cysteine 71, cysteine 74, cysteine 78, cysteine 108, cysteine 111, cysteine 114, and cysteine 118.

Belongs to the complex I 23 kDa subunit family. In terms of assembly, NDH-1 is composed of 14 different subunits. Subunits NuoA, H, J, K, L, M, N constitute the membrane sector of the complex. Requires [4Fe-4S] cluster as cofactor.

It is found in the cell inner membrane. It carries out the reaction a quinone + NADH + 5 H(+)(in) = a quinol + NAD(+) + 4 H(+)(out). In terms of biological role, NDH-1 shuttles electrons from NADH, via FMN and iron-sulfur (Fe-S) centers, to quinones in the respiratory chain. The immediate electron acceptor for the enzyme in this species is believed to be ubiquinone. Couples the redox reaction to proton translocation (for every two electrons transferred, four hydrogen ions are translocated across the cytoplasmic membrane), and thus conserves the redox energy in a proton gradient. The chain is NADH-quinone oxidoreductase subunit I from Ehrlichia ruminantium (strain Gardel).